We begin with the raw amino-acid sequence, 256 residues long: Thiazole synthase (256 aa).

Lysine 96 acts as the Schiff-base intermediate with DXP in catalysis. 1-deoxy-D-xylulose 5-phosphate contacts are provided by residues glycine 157, 183–184 (AG), and 205–206 (NT).

This sequence belongs to the ThiG family. Homotetramer. Forms heterodimers with either ThiH or ThiS.

Its subcellular location is the cytoplasm. The enzyme catalyses [ThiS sulfur-carrier protein]-C-terminal-Gly-aminoethanethioate + 2-iminoacetate + 1-deoxy-D-xylulose 5-phosphate = [ThiS sulfur-carrier protein]-C-terminal Gly-Gly + 2-[(2R,5Z)-2-carboxy-4-methylthiazol-5(2H)-ylidene]ethyl phosphate + 2 H2O + H(+). It participates in cofactor biosynthesis; thiamine diphosphate biosynthesis. In terms of biological role, catalyzes the rearrangement of 1-deoxy-D-xylulose 5-phosphate (DXP) to produce the thiazole phosphate moiety of thiamine. Sulfur is provided by the thiocarboxylate moiety of the carrier protein ThiS. In vitro, sulfur can be provided by H(2)S. This Clostridioides difficile (strain 630) (Peptoclostridium difficile) protein is Thiazole synthase.